The primary structure comprises 86 residues: Small ribosomal subunit protein uS17 (86 aa).

This sequence belongs to the universal ribosomal protein uS17 family. Part of the 30S ribosomal subunit.

One of the primary rRNA binding proteins, it binds specifically to the 5'-end of 16S ribosomal RNA. This Streptococcus gordonii (strain Challis / ATCC 35105 / BCRC 15272 / CH1 / DL1 / V288) protein is Small ribosomal subunit protein uS17.